Reading from the N-terminus, the 434-residue chain is 4-hydroxy-3-methylbut-2-en-1-yl diphosphate synthase (flavodoxin) (434 aa).

A compositionally biased stretch (polar residues) spans 1–15 (MQSEAQSPRSSQICS). Residues 1–24 (MQSEAQSPRSSQICSTEPVFGGHQ) are disordered. Cys-322, Cys-325, Cys-368, and Glu-375 together coordinate [4Fe-4S] cluster.

It belongs to the IspG family. Requires [4Fe-4S] cluster as cofactor.

It carries out the reaction (2E)-4-hydroxy-3-methylbut-2-enyl diphosphate + oxidized [flavodoxin] + H2O + 2 H(+) = 2-C-methyl-D-erythritol 2,4-cyclic diphosphate + reduced [flavodoxin]. It functions in the pathway isoprenoid biosynthesis; isopentenyl diphosphate biosynthesis via DXP pathway; isopentenyl diphosphate from 1-deoxy-D-xylulose 5-phosphate: step 5/6. Converts 2C-methyl-D-erythritol 2,4-cyclodiphosphate (ME-2,4cPP) into 1-hydroxy-2-methyl-2-(E)-butenyl 4-diphosphate. This chain is 4-hydroxy-3-methylbut-2-en-1-yl diphosphate synthase (flavodoxin), found in Burkholderia ambifaria (strain MC40-6).